The chain runs to 164 residues: NADH-quinone oxidoreductase subunit I 1 (164 aa).

2 consecutive 4Fe-4S ferredoxin-type domains span residues leucine 54–glycine 84 and valine 95–asparagine 124. Residues cysteine 64, cysteine 67, cysteine 70, cysteine 74, cysteine 104, cysteine 107, cysteine 110, and cysteine 114 each contribute to the [4Fe-4S] cluster site.

It belongs to the complex I 23 kDa subunit family. In terms of assembly, NDH-1 is composed of 14 different subunits. Subunits NuoA, H, J, K, L, M, N constitute the membrane sector of the complex. The cofactor is [4Fe-4S] cluster.

The protein resides in the cell inner membrane. It carries out the reaction a quinone + NADH + 5 H(+)(in) = a quinol + NAD(+) + 4 H(+)(out). Its function is as follows. NDH-1 shuttles electrons from NADH, via FMN and iron-sulfur (Fe-S) centers, to quinones in the respiratory chain. The immediate electron acceptor for the enzyme in this species is believed to be ubiquinone. Couples the redox reaction to proton translocation (for every two electrons transferred, four hydrogen ions are translocated across the cytoplasmic membrane), and thus conserves the redox energy in a proton gradient. The chain is NADH-quinone oxidoreductase subunit I 1 from Rhizobium meliloti (strain 1021) (Ensifer meliloti).